The primary structure comprises 223 residues: Octanoyltransferase (223 aa).

Positions 31-216 (GQIGDTLLLL…QIGEVFALEP (186 aa)) constitute a BPL/LPL catalytic domain. Residues 76–83 (RGGEVTYH), 145–147 (AIG), and 159–161 (GLA) contribute to the substrate site. The active-site Acyl-thioester intermediate is the cysteine 177.

Belongs to the LipB family.

The protein resides in the cytoplasm. It carries out the reaction octanoyl-[ACP] + L-lysyl-[protein] = N(6)-octanoyl-L-lysyl-[protein] + holo-[ACP] + H(+). Its pathway is protein modification; protein lipoylation via endogenous pathway; protein N(6)-(lipoyl)lysine from octanoyl-[acyl-carrier-protein]: step 1/2. In terms of biological role, catalyzes the transfer of endogenously produced octanoic acid from octanoyl-acyl-carrier-protein onto the lipoyl domains of lipoate-dependent enzymes. Lipoyl-ACP can also act as a substrate although octanoyl-ACP is likely to be the physiological substrate. In Chloroflexus aurantiacus (strain ATCC 29366 / DSM 635 / J-10-fl), this protein is Octanoyltransferase.